Consider the following 268-residue polypeptide: uncharacterized protein (268 aa).

This is an uncharacterized protein from Metamycoplasma hominis (strain ATCC 23114 / DSM 25592 / NBRC 14850 / NCTC 10111 / PG21) (Mycoplasma hominis).